The sequence spans 567 residues: NAC domain-containing protein 78 (567 aa).

Positions 9-159 (LAPGFRFHPT…AYVLCRIFQK (151 aa)) constitute an NAC domain. Residues 108-165 (VGMKKTLVYHKGRAPRGERTNWVMHEYRLSDEDLKKAGVPQEAYVLCRIFQKSGTGPK) mediate DNA binding. The segment at 393 to 436 (NQEALDQKPAPKELEKEVAGGKEAVEEKESGEGSSSKQDTDFKD) is disordered. Residues 397-423 (LDQKPAPKELEKEVAGGKEAVEEKESG) are compositionally biased toward basic and acidic residues. Residues 544–564 (LVFMCLWVLLLSVSFKIVTMV) form a helical membrane-spanning segment.

As to expression, expressed in root meristem. Expressed in roots, rosette leaves, cauline leaves, shoot apex, stems and flowers.

The protein resides in the membrane. It localises to the nucleus. Transcriptional activator activated by proteolytic cleavage through regulated intramembrane proteolysis (RIP). Transcripition activator associated with the induction of genes related to flavonoid biosynthesis and required for the accumulation of anthocyanins in response to high light stress. Plays a role in the regulation of 20S and 26S proteasomes in response to high light stress. The polypeptide is NAC domain-containing protein 78 (NAC078) (Arabidopsis thaliana (Mouse-ear cress)).